The sequence spans 943 residues: Nuclear factor of activated T-cells, cytoplasmic 1 (943 aa).

The segment at 22 to 48 (GRGETLGPAPRAGGTMKSAEEEHYGYA) is disordered. The segment at 118 to 123 (PRIEIT) is calcineurin-binding. The interval 126 to 218 (LGLYHNNNQF…CVSPKTTDPE (93 aa)) is transactivation domain A (TAD-A). A disordered region spans residues 200–298 (PQTSPWQSPC…GSPRVSVTDD (99 aa)). A compositionally biased stretch (polar residues) spans 201–214 (QTSPWQSPCVSPKT). 2 repeat units span residues 203-219 (SPWQ…DPEE) and 233-249 (SPRH…VTEE). Residues 203 to 298 (SPWQSPCVSP…GSPRVSVTDD (96 aa)) form a 3 X SP repeats region. 2 positions are modified to phosphoserine: S233 and S237. Residues 236–248 (HSPSTSPRASVTE) show a composition bias toward polar residues. A Phosphoserine; by PKA modification is found at S245. A Nuclear localization signal motif is present at residues 265–267 (KRK). The residue at position 269 (S269) is a Phosphoserine; by PKA. Pro residues predominate over residues 276-288 (PYSPHHSPTPSPH). Repeat unit 3 spans residues 282 to 298 (SPTPSPHGSPRVSVTDD). S294 carries the phosphoserine; by PKA modification. The short motif at 310–321 (SAIVAAINALTT) is the Nuclear export signal element. Positions 410 to 592 (PTLPALDWQL…NPIECSQRSA (183 aa)) constitute an RHD domain. A DNA-binding region spans residues 439–446 (RAHYETEG). The Nuclear localization signal signature appears at 682–684 (KRK). The tract at residues 703–943 (TEPTDDYEPA…NDLSSTSTHS (241 aa)) is transactivation domain B (TAD-B). The disordered stretch occupies residues 787 to 912 (HLGLPQPAGE…SPNLAPIPVT (126 aa)). Pro residues predominate over residues 846–855 (SPSPPLPPAT). The Nuclear export signal motif lies at 924–933 (YLDDVNEIIR).

Member of the multicomponent NFATC transcription complex that consists of at least two components, a pre-existing cytoplasmic component NFATC2 and an inducible nuclear component NFATC1. Other members such as NFATC4, NFATC3 or members of the activating protein-1 family, MAF, GATA4 and Cbp/p300 can also bind the complex. NFATC proteins bind to DNA as monomers. Interacts with HOMER2 and HOMER3; this interaction may compete with calcineurin/PPP3CA-binding and hence prevent NFATC1 dephosphorylation and activation. Interacts with TLE6/GRG6. Post-translationally, phosphorylated by NFATC-kinase and GSK3B; phosphorylation induces NFATC1 nuclear exit and dephosphorylation by calcineurin promotes nuclear import. Phosphorylation by PKA and DYRK2 negatively modulates nuclear accumulation, and promotes subsequent phosphorylation by GSK3B or casein kinase 1. Expressed in thymus, peripheral leukocytes as T-cells and spleen. Isoforms A are preferentially expressed in effector T-cells (thymus and peripheral leukocytes) whereas isoforms B and isoforms C are preferentially expressed in naive T-cells (spleen). Isoforms B are expressed in naive T-cells after first antigen exposure and isoforms A are expressed in effector T-cells after second antigen exposure. Isoforms IA are widely expressed but not detected in liver nor pancreas, neural expression is strongest in corpus callosum. Isoforms IB are expressed mostly in muscle, cerebellum, placenta and thymus, neural expression in fetal and adult brain, strongest in corpus callosum.

It localises to the cytoplasm. Its subcellular location is the nucleus. Functionally, plays a role in the inducible expression of cytokine genes in T-cells, especially in the induction of the IL-2 or IL-4 gene transcription. Also controls gene expression in embryonic cardiac cells. Could regulate not only the activation and proliferation but also the differentiation and programmed death of T-lymphocytes as well as lymphoid and non-lymphoid cells. Required for osteoclastogenesis and regulates many genes important for osteoclast differentiation and function. This Homo sapiens (Human) protein is Nuclear factor of activated T-cells, cytoplasmic 1 (NFATC1).